A 393-amino-acid chain; its full sequence is Adaptive-response sensory kinase SasA (393 aa).

The Histidine kinase domain occupies 171 to 393 (MLAHDLRSPL…CFHFTLPVFR (223 aa)). Phosphohistidine; by autocatalysis is present on His-174.

As to quaternary structure, homooligomerizes. Interacts with KaiC. Participates in the KaiABC clock complex, whose core is composed of a KaiC homohexamer, 6 KaiB and up to 6 KaiA dimers. SasA and KaiB(fs) compete to bind to KaiC.

The catalysed reaction is ATP + protein L-histidine = ADP + protein N-phospho-L-histidine.. In terms of biological role, member of the two-component regulatory system SasA/RpaA involved in genome-wide circadian gene expression. One of several clock output pathways. Participates in the Kai clock protein complex, the main circadian regulator in cyanobacteria, via its interaction with KaiC. KaiC enhances the autophosphorylation activity of SasA, which then transfers its phosphate group to RpaA to activate it. In addition to its output function, recruits fold-shifted KaiB (KaiB(fs)) to KaiC to cooperatively form the KaiB(6):KaiC(6) complex (independent of SasA kinase activity). Required for robustness of the circadian rhythm of gene expression and is involved in clock output, also required for adaptation to light/dark cycles. The sequence is that of Adaptive-response sensory kinase SasA from Gloeothece citriformis (strain PCC 7424) (Cyanothece sp. (strain PCC 7424)).